The sequence spans 597 residues: Aspartate--tRNA(Asp/Asn) ligase (597 aa).

Glu182 is a binding site for L-aspartate. An aspartate region spans residues Gln206–Lys209. Arg228 is an L-aspartate binding site. ATP contacts are provided by residues Arg228 to Glu230 and Gln237. His456 provides a ligand contact to L-aspartate. Glu490 lines the ATP pocket. An L-aspartate-binding site is contributed by Arg497. Gly542–Arg545 contributes to the ATP binding site.

Belongs to the class-II aminoacyl-tRNA synthetase family. Type 1 subfamily. Homodimer.

Its subcellular location is the cytoplasm. It catalyses the reaction tRNA(Asx) + L-aspartate + ATP = L-aspartyl-tRNA(Asx) + AMP + diphosphate. Functionally, aspartyl-tRNA synthetase with relaxed tRNA specificity since it is able to aspartylate not only its cognate tRNA(Asp) but also tRNA(Asn). Reaction proceeds in two steps: L-aspartate is first activated by ATP to form Asp-AMP and then transferred to the acceptor end of tRNA(Asp/Asn). The protein is Aspartate--tRNA(Asp/Asn) ligase of Desulfatibacillum aliphaticivorans.